The primary structure comprises 123 residues: Large ribosomal subunit protein uL29 (123 aa).

This sequence belongs to the universal ribosomal protein uL29 family.

This Euphorbia esula (Leafy spurge) protein is Large ribosomal subunit protein uL29 (RPL35).